The primary structure comprises 316 residues: MNVQIGIDLMGGDHSPLVIWEVLIDVLNSTASNSHFSFTAFASHEVQEQILSSCTYKECPKIIASDSFVTMDDSPLSAIRKKSSSMALGLDYLKEDKIDAFISTGNTAALITLSRTKIPVFPTVRRPALLVRVPTMRGCAVILDVGANVSVNPEEMLGFARMGLAYRQCIGEKEHPTIGLLNIGSEERKGTEAHRQTFRILRETFQDSFLGNIESGDVFSGSVDIVVADGFTGNIFLKTAEGVFDFLRHILGDKLESDVKRQLDYTIYPGSMVCGLSKLVIKCHGKACGRSLFNGISGSIDLARARVCQRILSSLS.

This sequence belongs to the PlsX family. Homodimer. Probably interacts with PlsY.

The protein resides in the cytoplasm. The enzyme catalyses a fatty acyl-[ACP] + phosphate = an acyl phosphate + holo-[ACP]. The protein operates within lipid metabolism; phospholipid metabolism. Catalyzes the reversible formation of acyl-phosphate (acyl-PO(4)) from acyl-[acyl-carrier-protein] (acyl-ACP). This enzyme utilizes acyl-ACP as fatty acyl donor, but not acyl-CoA. The polypeptide is Phosphate acyltransferase (Chlamydia felis (strain Fe/C-56) (Chlamydophila felis)).